A 538-amino-acid polypeptide reads, in one-letter code: Putative cysteine ligase BshC (538 aa).

The stretch at I248–L268 forms a coiled coil.

Belongs to the BshC family.

In terms of biological role, involved in bacillithiol (BSH) biosynthesis. May catalyze the last step of the pathway, the addition of cysteine to glucosamine malate (GlcN-Mal) to generate BSH. The polypeptide is Putative cysteine ligase BshC (Bacillus cereus (strain G9842)).